The primary structure comprises 441 residues: RUN domain-containing protein 3A (441 aa).

The interaction with RAP2A stretch occupies residues 1-293 (MEASFVQTTM…LQLQLEEAAA (293 aa)). The RUN domain occupies 52–184 (DDSSEEFVNF…IDFSFCLKGE (133 aa)). T210 is subject to Phosphothreonine. Residues 211-234 (DEEERHSAESSTSEDNSPEHPYLP) are disordered. S227 carries the post-translational modification Phosphoserine. A coiled-coil region spans residues 262 to 317 (YLEELVRLRESQLKDLEAENRRLQLQLEEAAAQNQREKRELEGVILELQEQLTGLI). Residues 367 to 379 (PLSAEASLSSDSQ) show a composition bias toward polar residues. The disordered stretch occupies residues 367–399 (PLSAEASLSSDSQRLGEGKRDEEPWGPIGKDPT). Over residues 380 to 389 (RLGEGKRDEE) the composition is skewed to basic and acidic residues. Phosphoserine is present on residues S411 and S414.

Belongs to the RUNDC3 family. Interacts with the GTP-bound form of RAP2A.

In terms of biological role, may act as an effector of RAP2A in neuronal cells. The polypeptide is RUN domain-containing protein 3A (RUNDC3A) (Bos taurus (Bovine)).